Reading from the N-terminus, the 377-residue chain is Chaperone protein DnaJ (377 aa).

Residues 5–70 (DYYEVLEVSR…EKRTIYDRYG (66 aa)) form the J domain. The segment at 138-215 (GCEKKIDITY…CQGKGYHEET (78 aa)) adopts a CR-type zinc-finger fold. Zn(2+) contacts are provided by Cys151, Cys154, Cys167, Cys170, Cys189, Cys192, Cys203, and Cys206. CXXCXGXG motif repeat units lie at residues 151–158 (CEECGGTG), 167–174 (CDYCGGQG), 189–196 (CPKCHGEG), and 203–210 (CPSCQGKG).

It belongs to the DnaJ family. Homodimer. The cofactor is Zn(2+).

Its subcellular location is the cytoplasm. In terms of biological role, participates actively in the response to hyperosmotic and heat shock by preventing the aggregation of stress-denatured proteins and by disaggregating proteins, also in an autonomous, DnaK-independent fashion. Unfolded proteins bind initially to DnaJ; upon interaction with the DnaJ-bound protein, DnaK hydrolyzes its bound ATP, resulting in the formation of a stable complex. GrpE releases ADP from DnaK; ATP binding to DnaK triggers the release of the substrate protein, thus completing the reaction cycle. Several rounds of ATP-dependent interactions between DnaJ, DnaK and GrpE are required for fully efficient folding. Also involved, together with DnaK and GrpE, in the DNA replication of plasmids through activation of initiation proteins. The chain is Chaperone protein DnaJ from Sulfurovum sp. (strain NBC37-1).